A 396-amino-acid chain; its full sequence is DNA polymerase IV (396 aa).

The UmuC domain maps to 6–186 (IIHVDMDAFY…LPISRLWGVG (181 aa)). Mg(2+) contacts are provided by D10 and D104. Residue E105 is part of the active site.

The protein belongs to the DNA polymerase type-Y family. Monomer. Requires Mg(2+) as cofactor.

Its subcellular location is the cytoplasm. The enzyme catalyses DNA(n) + a 2'-deoxyribonucleoside 5'-triphosphate = DNA(n+1) + diphosphate. Functionally, poorly processive, error-prone DNA polymerase involved in untargeted mutagenesis. Copies undamaged DNA at stalled replication forks, which arise in vivo from mismatched or misaligned primer ends. These misaligned primers can be extended by PolIV. Exhibits no 3'-5' exonuclease (proofreading) activity. May be involved in translesional synthesis, in conjunction with the beta clamp from PolIII. The chain is DNA polymerase IV from Desulfatibacillum aliphaticivorans.